Here is a 116-residue protein sequence, read N- to C-terminus: Protein TCL1B1 (116 aa).

Belongs to the TCL1 family.

This Mus musculus (Mouse) protein is Protein TCL1B1 (Tcl1b1).